Here is a 373-residue protein sequence, read N- to C-terminus: Anhydro-N-acetylmuramic acid kinase (373 aa).

Position 12–19 (12–19 (GTSLDGVD)) interacts with ATP.

This sequence belongs to the anhydro-N-acetylmuramic acid kinase family.

It carries out the reaction 1,6-anhydro-N-acetyl-beta-muramate + ATP + H2O = N-acetyl-D-muramate 6-phosphate + ADP + H(+). The protein operates within amino-sugar metabolism; 1,6-anhydro-N-acetylmuramate degradation. Its pathway is cell wall biogenesis; peptidoglycan recycling. Catalyzes the specific phosphorylation of 1,6-anhydro-N-acetylmuramic acid (anhMurNAc) with the simultaneous cleavage of the 1,6-anhydro ring, generating MurNAc-6-P. Is required for the utilization of anhMurNAc either imported from the medium or derived from its own cell wall murein, and thus plays a role in cell wall recycling. The protein is Anhydro-N-acetylmuramic acid kinase of Salmonella dublin (strain CT_02021853).